The sequence spans 335 residues: Glyceraldehyde-3-phosphate dehydrogenase (335 aa).

NAD(+) contacts are provided by residues 13-14 (TI) and glycine 111. A D-glyceraldehyde 3-phosphate-binding site is contributed by 140–142 (SCN). The active-site Nucleophile is cysteine 141. Residue arginine 169 participates in NAD(+) binding. Residues threonine 171 and 195 to 196 (HG) each bind D-glyceraldehyde 3-phosphate. Residue glutamine 300 participates in NAD(+) binding.

This sequence belongs to the glyceraldehyde-3-phosphate dehydrogenase family. Homotetramer.

It localises to the cytoplasm. It carries out the reaction D-glyceraldehyde 3-phosphate + phosphate + NADP(+) = (2R)-3-phospho-glyceroyl phosphate + NADPH + H(+). It catalyses the reaction D-glyceraldehyde 3-phosphate + phosphate + NAD(+) = (2R)-3-phospho-glyceroyl phosphate + NADH + H(+). It functions in the pathway carbohydrate degradation; glycolysis; pyruvate from D-glyceraldehyde 3-phosphate: step 1/5. The sequence is that of Glyceraldehyde-3-phosphate dehydrogenase from Methanosarcina mazei (strain ATCC BAA-159 / DSM 3647 / Goe1 / Go1 / JCM 11833 / OCM 88) (Methanosarcina frisia).